A 921-amino-acid chain; its full sequence is Valine--tRNA ligase (921 aa).

A 'HIGH' region motif is present at residues 40–50; that stretch reads PNVTGSLHMGH. The short motif at 522-526 is the 'KMSKS' region element; the sequence is KMSKS. Residue Lys-525 participates in ATP binding. Residues 849–921 adopt a coiled-coil conformation; the sequence is MADLIDKEAE…LQHKNRIESL (73 aa).

The protein belongs to the class-I aminoacyl-tRNA synthetase family. ValS type 1 subfamily. In terms of assembly, monomer.

It localises to the cytoplasm. It catalyses the reaction tRNA(Val) + L-valine + ATP = L-valyl-tRNA(Val) + AMP + diphosphate. In terms of biological role, catalyzes the attachment of valine to tRNA(Val). As ValRS can inadvertently accommodate and process structurally similar amino acids such as threonine, to avoid such errors, it has a 'posttransfer' editing activity that hydrolyzes mischarged Thr-tRNA(Val) in a tRNA-dependent manner. This chain is Valine--tRNA ligase, found in Legionella pneumophila (strain Lens).